The sequence spans 252 residues: Triosephosphate isomerase (252 aa).

10-12 (NWK) is a binding site for substrate. The active-site Electrophile is the His-96. Glu-168 serves as the catalytic Proton acceptor. Substrate is bound by residues Gly-174, Ser-213, and 234-235 (GG).

It belongs to the triosephosphate isomerase family. As to quaternary structure, homodimer.

The protein localises to the cytoplasm. It catalyses the reaction D-glyceraldehyde 3-phosphate = dihydroxyacetone phosphate. Its pathway is carbohydrate biosynthesis; gluconeogenesis. It participates in carbohydrate degradation; glycolysis; D-glyceraldehyde 3-phosphate from glycerone phosphate: step 1/1. In terms of biological role, involved in the gluconeogenesis. Catalyzes stereospecifically the conversion of dihydroxyacetone phosphate (DHAP) to D-glyceraldehyde-3-phosphate (G3P). The protein is Triosephosphate isomerase of Nitrosomonas eutropha (strain DSM 101675 / C91 / Nm57).